The sequence spans 1058 residues: Probable plasma membrane ATPase (1058 aa).

Residues 1–29 (MDNNQIPKNSPESSAINSAESSPKSNVSS) show a composition bias toward polar residues. The disordered stretch occupies residues 1-123 (MDNNQIPKNS…SSSGKKEEDY (123 aa)). Topologically, residues 1–212 (MDNNQIPKNS…DVKRYPILEF (212 aa)) are cytoplasmic. Residues 31 to 40 (VLHENHHKEQ) are compositionally biased toward basic and acidic residues. Residues 41–66 (QQLQQQLQQEQQQQQLPTTPQSEPTQ) are compositionally biased toward low complexity. Polar residues predominate over residues 96 to 111 (SLKTISGYPSSKNTEA). Residues 213-232 (LYFMWNPLSWTMEVAAIVSI) traverse the membrane as a helical segment. Residues 233 to 237 (ALLDW) are Extracellular-facing. The chain crosses the membrane as a helical span at residues 238–258 (VDFILICALLLLNATIGFIEE). Residues 259–387 (NTAGNAVEAL…GHLQVILRNI (129 aa)) are Cytoplasmic-facing. The chain crosses the membrane as a helical span at residues 388–407 (GLFCISFIAIWVLVELLVDF). At 408-425 (LGYDGYCHGVGGGRCLPL) the chain is on the extracellular side. Residues 426-447 (NNALVLLVGGIPIAMPTVLSVT) form a helical membrane-spanning segment. Over 448-783 (MAIGATQLSK…SSRKIFQRMR (336 aa)) the chain is Cytoplasmic. The active-site 4-aspartylphosphate intermediate is Asp480. Residues Asp728 and Asp732 each contribute to the Mg(2+) site. A helical membrane pass occupies residues 784–805 (NYVIYSVAATVRICTTFGILTV). Topologically, residues 806-810 (AWNFK) are extracellular. A helical transmembrane segment spans residues 811 to 833 (FPTIATVIIAILNDGTMLTISKD). Residues 834–849 (RVRARNEPDQWNLFEV) are Cytoplasmic-facing. The chain crosses the membrane as a helical span at residues 850 to 870 (FTMALCYGFYLVGSTIVFFAI). Topologically, residues 871-889 (IHDGTWFHDAINLRILTDN) are extracellular. Residues 890 to 910 (ELRGLIYLQVSISGLATIFVS) form a helical membrane-spanning segment. Residues 911-922 (RSQGFSYFERPG) are Cytoplasmic-facing. A helical membrane pass occupies residues 923–943 (NLVIFAFVMSQIVATFIGVYG). Residues 944–967 (FRGYPHDSFSDNPDYPVHGTNFQG) lie on the Extracellular side of the membrane. A helical membrane pass occupies residues 968–988 (CGWGWAVCAWIWCFLWYIPMD). The Cytoplasmic segment spans residues 989-1058 (FIKLGVTYIL…HKSVVTDNKV (70 aa)).

This sequence belongs to the cation transport ATPase (P-type) (TC 3.A.3) family. Type IIIA subfamily.

The protein localises to the cell membrane. The enzyme catalyses ATP + H2O + H(+)(in) = ADP + phosphate + 2 H(+)(out). With respect to regulation, acid pH levels increase its ATPase activity. Functionally, P-type plasma membrane H+-ATPase (proton pump). The proton gradient it generates drives the active transport of nutrients by H(+) symport. The resulting external acidification and/or internal alkinization may mediate growth responses. The polypeptide is Probable plasma membrane ATPase (patB) (Dictyostelium discoideum (Social amoeba)).